We begin with the raw amino-acid sequence, 263 residues long: Hydroxyethylthiazole kinase (263 aa).

M41 contributes to the substrate binding site. Residues R117 and S163 each coordinate ATP. A190 is a substrate binding site.

It belongs to the Thz kinase family. Mg(2+) serves as cofactor.

The catalysed reaction is 5-(2-hydroxyethyl)-4-methylthiazole + ATP = 4-methyl-5-(2-phosphooxyethyl)-thiazole + ADP + H(+). It functions in the pathway cofactor biosynthesis; thiamine diphosphate biosynthesis; 4-methyl-5-(2-phosphoethyl)-thiazole from 5-(2-hydroxyethyl)-4-methylthiazole: step 1/1. Functionally, catalyzes the phosphorylation of the hydroxyl group of 4-methyl-5-beta-hydroxyethylthiazole (THZ). The protein is Hydroxyethylthiazole kinase of Haemophilus influenzae (strain PittEE).